We begin with the raw amino-acid sequence, 88 residues long: U1-hexatoxin-Iw1c (88 aa).

The first 17 residues, 1–17 (LKFVVLICLVIMASTSA), serve as a signal peptide directing secretion. Residue Q18 is modified to Pyrrolidone carboxylic acid. 5 disulfide bridges follow: C20–C31, C25–C39, C30–C65, C49–C73, and C67–C80. The propeptide occupies 86–88 (RSE).

It belongs to the MIT-like AcTx family. Expressed by the venom gland.

It is found in the secreted. In Illawarra wisharti (Illawarra funnel-web spider), this protein is U1-hexatoxin-Iw1c.